The chain runs to 499 residues: Cysteine--tRNA ligase (499 aa).

Position 29 (Cys-29) interacts with Zn(2+). A 'HIGH' region motif is present at residues 31–41; sequence VTVYDLCHLGH. The Zn(2+) site is built by Cys-213, His-238, and Glu-242. Positions 270–274 match the 'KMSKS' region motif; it reads KMSKS. Lys-273 contributes to the ATP binding site.

It belongs to the class-I aminoacyl-tRNA synthetase family. As to quaternary structure, monomer. The cofactor is Zn(2+).

Its subcellular location is the cytoplasm. The catalysed reaction is tRNA(Cys) + L-cysteine + ATP = L-cysteinyl-tRNA(Cys) + AMP + diphosphate. The chain is Cysteine--tRNA ligase from Prochlorococcus marinus (strain MIT 9303).